A 113-amino-acid chain; its full sequence is Hydrogenase maturation factor HypA (113 aa).

Histidine 2 serves as a coordination point for Ni(2+). Residues cysteine 73, cysteine 76, cysteine 89, and cysteine 92 each coordinate Zn(2+).

The protein belongs to the HypA/HybF family.

Involved in the maturation of [NiFe] hydrogenases. Required for nickel insertion into the metal center of the hydrogenase. This Azorhizobium caulinodans (strain ATCC 43989 / DSM 5975 / JCM 20966 / LMG 6465 / NBRC 14845 / NCIMB 13405 / ORS 571) protein is Hydrogenase maturation factor HypA.